Here is a 618-residue protein sequence, read N- to C-terminus: Proline--tRNA ligase (618 aa).

It belongs to the class-II aminoacyl-tRNA synthetase family. ProS type 1 subfamily. In terms of assembly, homodimer.

It localises to the cytoplasm. The catalysed reaction is tRNA(Pro) + L-proline + ATP = L-prolyl-tRNA(Pro) + AMP + diphosphate. Its function is as follows. Catalyzes the attachment of proline to tRNA(Pro) in a two-step reaction: proline is first activated by ATP to form Pro-AMP and then transferred to the acceptor end of tRNA(Pro). As ProRS can inadvertently accommodate and process non-cognate amino acids such as alanine and cysteine, to avoid such errors it has two additional distinct editing activities against alanine. One activity is designated as 'pretransfer' editing and involves the tRNA(Pro)-independent hydrolysis of activated Ala-AMP. The other activity is designated 'posttransfer' editing and involves deacylation of mischarged Ala-tRNA(Pro). The misacylated Cys-tRNA(Pro) is not edited by ProRS. The polypeptide is Proline--tRNA ligase (Streptococcus pyogenes serotype M18 (strain MGAS8232)).